A 453-amino-acid polypeptide reads, in one-letter code: Transmembrane protease serine 3 (453 aa).

Residues 1–48 are Cytoplasmic-facing; that stretch reads MGENDPPAAEAPFSFRSLFGLDDLKISPVAPDGDAVAAQILSLLPLKF. The chain crosses the membrane as a helical; Signal-anchor for type II membrane protein span at residues 49–69; it reads FPIIVIGIIALILALAIGLGI. Topologically, residues 70–453 are extracellular; the sequence is HFDCSGKYRC…HEQLERDLKT (384 aa). The 37-residue stretch at 72–108 folds into the LDL-receptor class A domain; it reads DCSGKYRCHSSFKCIELTARCDGVSDCKNAEDEYRCV. 10 cysteine pairs are disulfide-bonded: Cys73-Cys85, Cys79-Cys98, Cys92-Cys107, Cys129-Cys194, Cys142-Cys204, Cys207-Cys324, Cys242-Cys258, Cys338-Cys406, Cys369-Cys385, and Cys396-Cys424. The SRCR domain occupies 104 to 205; it reads EYRCVRVSGQ…SGHVVTLKCS (102 aa). The region spanning 217-448 is the Peptidase S1 domain; it reads IVGGNMSSLT…FLDWIHEQLE (232 aa). N-linked (GlcNAc...) asparagine glycosylation is present at Asn221. Residues His257 and Asp304 each act as charge relay system in the active site. The active-site Charge relay system is the Ser400.

Belongs to the peptidase S1 family. In terms of processing, undergoes autoproteolytic activation. In terms of tissue distribution, strongly expressed in liver, cochlea, brain, cerebellum, spleen, lung, and muscle and at a lower degree in retina, kidney, and heart. Expressed in the spiral ganglion, the cells supporting the organ of Corti and the stria vascularis. Isoform 2 is strongly expressed only in the cochlea with very faint expression in the cerebellum, spleen and muscle.

It is found in the endoplasmic reticulum membrane. Functionally, probable serine protease that plays a role in hearing. Acts as a permissive factor for cochlear hair cell survival and activation at the onset of hearing and is required for saccular hair cell survival. Activates ENaC (in vitro). The chain is Transmembrane protease serine 3 (Tmprss3) from Mus musculus (Mouse).